The chain runs to 157 residues: Lipoprotein signal peptidase (157 aa).

4 helical membrane passes run 10 to 30, 38 to 58, 59 to 79, and 84 to 104; these read LVFM…KYAI, SLMV…LLSF, LEGG…IFLI, and LFKT…SNVL. Residues aspartate 114 and aspartate 131 contribute to the active site. The chain crosses the membrane as a helical span at residues 122 to 142; the sequence is FDFAIFNFADVMIDVGVGVLL.

It belongs to the peptidase A8 family.

The protein localises to the cell inner membrane. The catalysed reaction is Release of signal peptides from bacterial membrane prolipoproteins. Hydrolyzes -Xaa-Yaa-Zaa-|-(S,diacylglyceryl)Cys-, in which Xaa is hydrophobic (preferably Leu), and Yaa (Ala or Ser) and Zaa (Gly or Ala) have small, neutral side chains.. Its pathway is protein modification; lipoprotein biosynthesis (signal peptide cleavage). In terms of biological role, this protein specifically catalyzes the removal of signal peptides from prolipoproteins. This chain is Lipoprotein signal peptidase, found in Helicobacter pylori (strain HPAG1).